The primary structure comprises 423 residues: MPGCPCPGIGMAGQRLLFLAALALELLGGAGGSQQALRSRGVAAACRLDSKESESWGALLSGERLETWICSLLGSLMVGLSGVFPLLVIPLEMGTTLRSEAGARRLKQLLSFALGGLLGNVFLHLLPEAWAYTNSASSGGERQSLQQQQQLGLWVIAGFLTFLVLEKLFFDSKGKEETSQAPSKDPAAAAALNGGHYLAQPAAEPGPSAVVRNIKVSGYLNLLANTIDNFTHGLAVAASFLVSKKIGLLTTMAILLHEIPHEVGDFAILLRAGFDRWSAAKLQLSTALGGLLGACFAICAQSPKGVGTGVGVVAVRRGALAEGHGRPDPGIRARLCSGPPRGMGGGRYTWPPSPPQPVRAPPPATEETVAWILPFTSGGFLYIALVNVLPDLLEEDDPWRSLQQVLLLCAGIVVMVLFSVFVE.

The Lumenal portion of the chain corresponds to 1–15; sequence MPGCPCPGIGMAGQR. The chain crosses the membrane as a helical span at residues 16-36; it reads LLFLAALALELLGGAGGSQQA. Residues 37 to 68 are Cytoplasmic-facing; that stretch reads LRSRGVAAACRLDSKESESWGALLSGERLETW. A helical membrane pass occupies residues 69–89; sequence ICSLLGSLMVGLSGVFPLLVI. The Lumenal segment spans residues 90–108; sequence PLEMGTTLRSEAGARRLKQ. The chain crosses the membrane as a helical span at residues 109–129; sequence LLSFALGGLLGNVFLHLLPEA. The Cytoplasmic portion of the chain corresponds to 130 to 149; the sequence is WAYTNSASSGGERQSLQQQQ. A helical transmembrane segment spans residues 150 to 170; it reads QLGLWVIAGFLTFLVLEKLFF. Residues 171 to 235 are Lumenal-facing; that stretch reads DSKGKEETSQ…TIDNFTHGLA (65 aa). Residues 236 to 256 traverse the membrane as a helical segment; sequence VAASFLVSKKIGLLTTMAILL. The XEXPHE-motif motif lies at 257–262; it reads HEIPHE. Residues 257 to 278 are Cytoplasmic-facing; it reads HEIPHEVGDFAILLRAGFDRWS. A helical transmembrane segment spans residues 279 to 299; that stretch reads AAKLQLSTALGGLLGACFAIC. The Lumenal portion of the chain corresponds to 300–368; it reads AQSPKGVGTG…RAPPPATEET (69 aa). The chain crosses the membrane as a helical span at residues 369-389; the sequence is VAWILPFTSGGFLYIALVNVL. The Cytoplasmic segment spans residues 390–401; sequence PDLLEEDDPWRS. Residues 402–422 traverse the membrane as a helical segment; it reads LQQVLLLCAGIVVMVLFSVFV. Glutamate 423 is a topological domain (lumenal).

The protein belongs to the ZIP transporter (TC 2.A.5) family. Homodimer.

The protein resides in the golgi apparatus membrane. It localises to the cytoplasmic vesicle membrane. The protein localises to the endoplasmic reticulum membrane. The enzyme catalyses Zn(2+)(in) = Zn(2+)(out). Its function is as follows. Functions as a zinc transporter transporting Zn(2+) from the Golgi apparatus to the cytosol and thus influences the zinc level at least in areas of the cytosol. May regulate beige adipocyte differentiation. In Bos taurus (Bovine), this protein is Zinc transporter ZIP13.